A 452-amino-acid chain; its full sequence is Protein phosphatase 1F (452 aa).

One can recognise a PPM-type phosphatase domain in the interval 153-410 (LVSIHAIRNT…DNITVMVVFL (258 aa)). Mn(2+) contacts are provided by Asp195, Gly196, Asp357, and Asp401. The residue at position 452 (Ser452) is a Phosphoserine.

Belongs to the PP2C family. In terms of assembly, associates with FEM1B. The cofactor is Mg(2+). Requires Mn(2+) as cofactor. In terms of tissue distribution, expressed in the liver.

The catalysed reaction is O-phospho-L-seryl-[protein] + H2O = L-seryl-[protein] + phosphate. The enzyme catalyses O-phospho-L-threonyl-[protein] + H2O = L-threonyl-[protein] + phosphate. Functionally, dephosphorylates and concomitantly deactivates CaM-kinase II activated upon autophosphorylation, and CaM-kinases IV and I activated upon phosphorylation by CaM-kinase kinase. Promotes apoptosis. The polypeptide is Protein phosphatase 1F (Ppm1f) (Mus musculus (Mouse)).